Reading from the N-terminus, the 358-residue chain is 3-dehydroquinate synthase (358 aa).

NAD(+)-binding positions include 70 to 75, 104 to 108, 128 to 129, K141, K150, and 168 to 171; these read DGEQFK, GVIGD, TT, and CLHT. Zn(2+) contacts are provided by E183, H246, and H263.

This sequence belongs to the sugar phosphate cyclases superfamily. Dehydroquinate synthase family. The cofactor is Co(2+). Zn(2+) is required as a cofactor. It depends on NAD(+) as a cofactor.

The protein resides in the cytoplasm. The catalysed reaction is 7-phospho-2-dehydro-3-deoxy-D-arabino-heptonate = 3-dehydroquinate + phosphate. Its pathway is metabolic intermediate biosynthesis; chorismate biosynthesis; chorismate from D-erythrose 4-phosphate and phosphoenolpyruvate: step 2/7. In terms of biological role, catalyzes the conversion of 3-deoxy-D-arabino-heptulosonate 7-phosphate (DAHP) to dehydroquinate (DHQ). The polypeptide is 3-dehydroquinate synthase (Shewanella baltica (strain OS155 / ATCC BAA-1091)).